We begin with the raw amino-acid sequence, 236 residues long: Small ribosomal subunit protein uS2c (236 aa).

Belongs to the universal ribosomal protein uS2 family.

Its subcellular location is the plastid. It localises to the chloroplast. The sequence is that of Small ribosomal subunit protein uS2c (rps2) from Phalaenopsis aphrodite subsp. formosana (Moth orchid).